The sequence spans 569 residues: Urease subunit alpha (569 aa).

In terms of domain architecture, Urease spans 131–569; the sequence is GSIDTHIHFI…VPMAQRYFLL (439 aa). Ni(2+) contacts are provided by H136, H138, and K219. At K219 the chain carries N6-carboxylysine. A substrate-binding site is contributed by H221. Residues H248 and H274 each coordinate Ni(2+). The active-site Proton donor is H322. D362 lines the Ni(2+) pocket.

This sequence belongs to the metallo-dependent hydrolases superfamily. Urease alpha subunit family. In terms of assembly, heterotrimer of UreA (gamma), UreB (beta) and UreC (alpha) subunits. Three heterotrimers associate to form the active enzyme. Ni cation serves as cofactor. Carboxylation allows a single lysine to coordinate two nickel ions.

The protein resides in the cytoplasm. It carries out the reaction urea + 2 H2O + H(+) = hydrogencarbonate + 2 NH4(+). The protein operates within nitrogen metabolism; urea degradation; CO(2) and NH(3) from urea (urease route): step 1/1. In Prochlorococcus marinus (strain MIT 9301), this protein is Urease subunit alpha.